Consider the following 205-residue polypeptide: ATP-dependent Clp protease proteolytic subunit (205 aa).

The Nucleophile role is filled by Ser107. His132 is an active-site residue.

Belongs to the peptidase S14 family. As to quaternary structure, fourteen ClpP subunits assemble into 2 heptameric rings which stack back to back to give a disk-like structure with a central cavity, resembling the structure of eukaryotic proteasomes.

Its subcellular location is the cytoplasm. It carries out the reaction Hydrolysis of proteins to small peptides in the presence of ATP and magnesium. alpha-casein is the usual test substrate. In the absence of ATP, only oligopeptides shorter than five residues are hydrolyzed (such as succinyl-Leu-Tyr-|-NHMec, and Leu-Tyr-Leu-|-Tyr-Trp, in which cleavage of the -Tyr-|-Leu- and -Tyr-|-Trp bonds also occurs).. In terms of biological role, cleaves peptides in various proteins in a process that requires ATP hydrolysis. Has a chymotrypsin-like activity. Plays a major role in the degradation of misfolded proteins. In Pseudoalteromonas translucida (strain TAC 125), this protein is ATP-dependent Clp protease proteolytic subunit.